The following is a 435-amino-acid chain: 5-methylthioadenosine/S-adenosylhomocysteine deaminase (435 aa).

Zn(2+)-binding residues include H65 and H67. Substrate is bound by residues E94, R150, and H189. H216 lines the Zn(2+) pocket. Residues E219 and D304 each coordinate substrate. D304 provides a ligand contact to Zn(2+).

It belongs to the metallo-dependent hydrolases superfamily. MTA/SAH deaminase family. Zn(2+) is required as a cofactor.

It catalyses the reaction S-adenosyl-L-homocysteine + H2O + H(+) = S-inosyl-L-homocysteine + NH4(+). The catalysed reaction is S-methyl-5'-thioadenosine + H2O + H(+) = S-methyl-5'-thioinosine + NH4(+). Functionally, catalyzes the deamination of 5-methylthioadenosine and S-adenosyl-L-homocysteine into 5-methylthioinosine and S-inosyl-L-homocysteine, respectively. Is also able to deaminate adenosine. The protein is 5-methylthioadenosine/S-adenosylhomocysteine deaminase of Bacillus cytotoxicus (strain DSM 22905 / CIP 110041 / 391-98 / NVH 391-98).